A 478-amino-acid chain; its full sequence is Endoglucanase 18 (478 aa).

The first 21 residues, 1–21 (MGKLLVVMLIGMFLAFESLEA), serve as a signal peptide directing secretion. Asn-29 carries N-linked (GlcNAc...) asparagine glycosylation. Asp-76 functions as the Nucleophile in the catalytic mechanism. The active site involves His-398. A disordered region spans residues 433–452 (HTGAIVGGPNSSDQYSDKRT). A glycan (N-linked (GlcNAc...) asparagine) is linked at Asn-442. Active-site residues include Asp-449 and Glu-458.

This sequence belongs to the glycosyl hydrolase 9 (cellulase E) family.

Its subcellular location is the secreted. It catalyses the reaction Endohydrolysis of (1-&gt;4)-beta-D-glucosidic linkages in cellulose, lichenin and cereal beta-D-glucans.. The sequence is that of Endoglucanase 18 from Arabidopsis thaliana (Mouse-ear cress).